Reading from the N-terminus, the 565-residue chain is CTP synthase (565 aa).

Residues 1–272 are amidoligase domain; the sequence is MARPKNVKHI…DKRVLKKLGI (272 aa). Residue Ser18 participates in CTP binding. UTP is bound at residue Ser18. Residue 19 to 24 participates in ATP binding; it reads SLGKGI. Tyr59 serves as a coordination point for L-glutamine. Asp76 contributes to the ATP binding site. Asp76 and Glu146 together coordinate Mg(2+). Residues 153-155, 193-198, and Lys229 contribute to the CTP site; these read DIE and KTKPTQ. UTP-binding positions include 193–198 and Lys229; that span reads KTKPTQ. The Glutamine amidotransferase type-1 domain maps to 299-543; that stretch reads TIAVCGKYTE…VAAAKAFAFG (245 aa). Position 363 (Gly363) interacts with L-glutamine. Catalysis depends on Cys390, which acts as the Nucleophile; for glutamine hydrolysis. L-glutamine-binding positions include 391 to 394, Glu414, and Arg471; that span reads LGMQ. Catalysis depends on residues His516 and Glu518.

It belongs to the CTP synthase family. In terms of assembly, homotetramer.

The enzyme catalyses UTP + L-glutamine + ATP + H2O = CTP + L-glutamate + ADP + phosphate + 2 H(+). The catalysed reaction is L-glutamine + H2O = L-glutamate + NH4(+). It carries out the reaction UTP + NH4(+) + ATP = CTP + ADP + phosphate + 2 H(+). It functions in the pathway pyrimidine metabolism; CTP biosynthesis via de novo pathway; CTP from UDP: step 2/2. With respect to regulation, allosterically activated by GTP, when glutamine is the substrate; GTP has no effect on the reaction when ammonia is the substrate. The allosteric effector GTP functions by stabilizing the protein conformation that binds the tetrahedral intermediate(s) formed during glutamine hydrolysis. Inhibited by the product CTP, via allosteric rather than competitive inhibition. Its function is as follows. Catalyzes the ATP-dependent amination of UTP to CTP with either L-glutamine or ammonia as the source of nitrogen. Regulates intracellular CTP levels through interactions with the four ribonucleotide triphosphates. In Chlorobium phaeobacteroides (strain BS1), this protein is CTP synthase.